The primary structure comprises 43 residues: Hemolysin H1U (43 aa).

Methionine 1 is subject to N-formylmethionine.

This sequence belongs to the staphylococcal hemolytic protein family.

It is found in the secreted. Its function is as follows. Virulence factor. Causes hemolysis of erythrocytes. Acts synergistically with beta-hemolysins from S.aureus ATCC 25923. Cytotoxic towards human dermal fibroblasts. This is Hemolysin H1U from Staphylococcus ureilyticus (Staphylococcus cohnii subsp. urealyticus).